A 591-amino-acid chain; its full sequence is NADP-dependent malic enzyme (591 aa).

Residue Y139 is the Proton donor of the active site. R192 provides a ligand contact to NAD(+). K210 acts as the Proton acceptor in catalysis. Residues E282, D283, and D306 each contribute to the a divalent metal cation site. D306 lines the NAD(+) pocket. 335 to 351 contributes to the NADP(+) binding site; that stretch reads LFLGAGEAGTGIAELIA. N447 provides a ligand contact to NAD(+).

The protein belongs to the malic enzymes family. As to quaternary structure, homotetramer. Requires Mg(2+) as cofactor. The cofactor is Mn(2+).

Its subcellular location is the cytoplasm. The catalysed reaction is (S)-malate + NADP(+) = pyruvate + CO2 + NADPH. It catalyses the reaction oxaloacetate + H(+) = pyruvate + CO2. The protein is NADP-dependent malic enzyme of Vitis vinifera (Grape).